The sequence spans 419 residues: MRKIVINGGLPLQGEITISGAKNSVVALIPAIILADDVVTLDCVPDISDVASLVEIMELMGATVKRYDDVLEIDPRGVQNIPMPYGKINSLRASYYFYGSLLGRFGEATVGLPGGCDLGPRPIDLHLKAFEAMGATASYEGDNMKLSAKDTGLHGASIYMDTVSVGATINTMIAAVKANGRTIIENAAREPEIIDVATLLNNMGAHIRGAGTNIIIIDGVERLHGTRHQVIPDRIEAGTYISLAAAVGKGIRINNVLYEHLEGFIAKLEEMGVRMTVSEDSIFVEEQSNLKAINIKTAPYPGFATDLQQPLTPLLLRANGRGTIVDTIYEKRVNHVFELAKMDADISTTNGHILYTGGRDLRGASVKATDLRAGAALVIAGLMAEGKTEITNIEFILRGYSDIIEKLRNLGADIRLVED.

22 to 23 (KN) is a binding site for phosphoenolpyruvate. Residue Arg92 participates in UDP-N-acetyl-alpha-D-glucosamine binding. The Proton donor role is filled by Cys116. Residue Cys116 is modified to 2-(S-cysteinyl)pyruvic acid O-phosphothioketal. UDP-N-acetyl-alpha-D-glucosamine is bound by residues 121–125 (RPIDL), Asp306, and Ile328.

Belongs to the EPSP synthase family. MurA subfamily.

Its subcellular location is the cytoplasm. It catalyses the reaction phosphoenolpyruvate + UDP-N-acetyl-alpha-D-glucosamine = UDP-N-acetyl-3-O-(1-carboxyvinyl)-alpha-D-glucosamine + phosphate. It participates in cell wall biogenesis; peptidoglycan biosynthesis. Functionally, cell wall formation. Adds enolpyruvyl to UDP-N-acetylglucosamine. Target for the antibiotic fosfomycin. Involved in heteroresistance to antibiotic fosfomycin. Heteroresistance is the ability of a clonal population to grow one or several subpopulations at a frequency of 10(-7) to 10(-3) in the presence of a higher antibiotic concentration than that predicted to be effective by measurement of the minimum inhibitory concentration (MIC). The sequence is that of UDP-N-acetylglucosamine 1-carboxyvinyltransferase from Streptococcus pneumoniae serotype 2 (strain D39 / NCTC 7466).